Here is a 101-residue protein sequence, read N- to C-terminus: Large ribosomal subunit protein uL24 (101 aa).

The protein belongs to the universal ribosomal protein uL24 family. As to quaternary structure, part of the 50S ribosomal subunit.

One of two assembly initiator proteins, it binds directly to the 5'-end of the 23S rRNA, where it nucleates assembly of the 50S subunit. Its function is as follows. One of the proteins that surrounds the polypeptide exit tunnel on the outside of the subunit. The polypeptide is Large ribosomal subunit protein uL24 (Borrelia turicatae (strain 91E135)).